Here is a 92-residue protein sequence, read N- to C-terminus: Small ribosomal subunit protein uS19c (92 aa).

Belongs to the universal ribosomal protein uS19 family.

The protein localises to the plastid. It is found in the chloroplast. In terms of biological role, protein S19 forms a complex with S13 that binds strongly to the 16S ribosomal RNA. The chain is Small ribosomal subunit protein uS19c from Eucalyptus globulus subsp. globulus (Tasmanian blue gum).